Here is a 268-residue protein sequence, read N- to C-terminus: MALNFPNIDPVIVKFGPFDIFGQTFEPALRWYGFTYLVGFVAAMWLLNRQADRSNGLWSREQVSDLLFYGFLGVILGGRIGYVLFYHFDYFLASPMYLFKISEGGMSFHGGLMGVITAMIYIAWKQKRTFFAVADMVAPVVPIGLGAGRIGNFINGELWGRVTDVPWAMVFPSGGPEPRHPSQLYQFALEGVALFLLLYWFSKRTKKVGAVSGMFLLGYGIFRVIVETVRQPDAQLGLYWGFMTMGQILSVPMVLFGLYLILRPEGKQ.

A run of 7 helical transmembrane segments spans residues 27-47 (PALR…MWLL), 66-86 (LLFY…VLFY), 104-124 (GGMS…YIAW), 130-150 (FFAV…AGRI), 181-201 (PSQL…LYWF), 208-228 (VGAV…IVET), and 242-262 (FMTM…YLIL). A 1,2-diacyl-sn-glycero-3-phospho-(1'-sn-glycerol) is bound at residue Arg149.

Belongs to the Lgt family.

The protein localises to the cell inner membrane. It catalyses the reaction L-cysteinyl-[prolipoprotein] + a 1,2-diacyl-sn-glycero-3-phospho-(1'-sn-glycerol) = an S-1,2-diacyl-sn-glyceryl-L-cysteinyl-[prolipoprotein] + sn-glycerol 1-phosphate + H(+). It functions in the pathway protein modification; lipoprotein biosynthesis (diacylglyceryl transfer). Its function is as follows. Catalyzes the transfer of the diacylglyceryl group from phosphatidylglycerol to the sulfhydryl group of the N-terminal cysteine of a prolipoprotein, the first step in the formation of mature lipoproteins. This chain is Phosphatidylglycerol--prolipoprotein diacylglyceryl transferase, found in Shewanella sp. (strain MR-4).